Consider the following 218-residue polypeptide: Probable 1-Cys peroxiredoxin (218 aa).

The region spanning 5–166 is the Thioredoxin domain; the sequence is WALGDLVPDI…VLRVLDSLQL (162 aa). Residue cysteine 47 is the Cysteine sulfenic acid (-SOH) intermediate of the active site.

It belongs to the peroxiredoxin family. Prx6 subfamily.

It localises to the nucleus. The protein resides in the cytoplasm. It catalyses the reaction a hydroperoxide + [thioredoxin]-dithiol = an alcohol + [thioredoxin]-disulfide + H2O. Functionally, thiol-specific peroxidase that catalyzes the reduction of hydrogen peroxide and organic hydroperoxides to water and alcohols, respectively. Seems to contribute to the inhibition of germination during stress. Associated with the rehydration events involved in the recovery of the desiccation-tolerant moss. The sequence is that of Probable 1-Cys peroxiredoxin from Syntrichia ruralis (Great hairy screw-moss).